The following is a 359-amino-acid chain: CMP-N-acetylneuraminate-poly-alpha-2,8-sialyltransferase (359 aa).

Over 1–7 (MRSIRKR) the chain is Cytoplasmic. A helical; Signal-anchor for type II membrane protein membrane pass occupies residues 8-20 (WTICTISLLLIFY). Residues 21–359 (KTKEMARTEE…KLTTGKCIKQ (339 aa)) lie on the Lumenal side of the membrane. Residues Asn-50, Asn-74, and Asn-119 are each glycosylated (N-linked (GlcNAc...) asparagine). 2 cysteine pairs are disulfide-bonded: Cys-142–Cys-292 and Cys-156–Cys-356. CMP-N-acetyl-beta-neuraminate is bound by residues Asn-147 and Asn-170. Residues Asn-204 and Asn-219 are each glycosylated (N-linked (GlcNAc...) asparagine). Positions 279, 280, 281, and 301 each coordinate CMP-N-acetyl-beta-neuraminate. His-331 (proton donor/acceptor) is an active-site residue.

The protein belongs to the glycosyltransferase 29 family. Autopolysialylated.

The protein localises to the golgi apparatus membrane. It is found in the secreted. It carries out the reaction [N-acetyl-alpha-D-neuraminosyl-(2-&gt;8)](n) + CMP-N-acetyl-beta-neuraminate = [N-acetyl-alpha-D-neuraminosyl-(2-&gt;8)](n+1) + CMP + H(+). Its function is as follows. Catalyzes the transfer of a sialic acid from a CMP-linked sialic acid donor onto a terminal alpha-2,3-, alpha-2,6-, or alpha-2,8-linked sialic acid of an N-linked glycan protein acceptor through alpha-2,8-linkages. Therefore, participates in polysialic acid synthesis on various sialylated N-acetyllactosaminyl oligosaccharides, including NCAM1 N-glycans, FETUB N-glycans and AHSG. It is noteworthy that alpha-2,3-linked sialic acid is apparently a better acceptor than alpha-2,6-linked sialic acid. In Bos taurus (Bovine), this protein is CMP-N-acetylneuraminate-poly-alpha-2,8-sialyltransferase (ST8SIA4).